Consider the following 187-residue polypeptide: Flavin prenyltransferase UbiX (187 aa).

FMN is bound by residues G9 to S11, S34, and R123. Dimethylallyl phosphate is bound by residues Y153 and K169.

It belongs to the UbiX/PAD1 family.

The enzyme catalyses dimethylallyl phosphate + FMNH2 = prenylated FMNH2 + phosphate. In terms of biological role, flavin prenyltransferase that catalyzes the synthesis of the prenylated FMN cofactor (prenyl-FMN) for 4-hydroxy-3-polyprenylbenzoic acid decarboxylase UbiD. The prenyltransferase is metal-independent and links a dimethylallyl moiety from dimethylallyl monophosphate (DMAP) to the flavin N5 and C6 atoms of FMN. The chain is Flavin prenyltransferase UbiX from Helicobacter pylori (strain ATCC 700392 / 26695) (Campylobacter pylori).